Consider the following 185-residue polypeptide: Ribosome-recycling factor (185 aa).

This sequence belongs to the RRF family.

Its subcellular location is the cytoplasm. In terms of biological role, responsible for the release of ribosomes from messenger RNA at the termination of protein biosynthesis. May increase the efficiency of translation by recycling ribosomes from one round of translation to another. This chain is Ribosome-recycling factor, found in Aliarcobacter butzleri (strain RM4018) (Arcobacter butzleri).